A 246-amino-acid chain; its full sequence is Carboxymethylenebutenolidase homolog (246 aa).

Residues cysteine 132, aspartate 179, and histidine 212 contribute to the active site.

It belongs to the dienelactone hydrolase family.

The protein resides in the cytoplasm. It localises to the cytosol. Functionally, cysteine hydrolase. The protein is Carboxymethylenebutenolidase homolog (cmbl) of Xenopus tropicalis (Western clawed frog).